Consider the following 183-residue polypeptide: Large ribosomal subunit protein uL6 (183 aa).

This sequence belongs to the universal ribosomal protein uL6 family. In terms of assembly, part of the 50S ribosomal subunit.

This protein binds to the 23S rRNA, and is important in its secondary structure. It is located near the subunit interface in the base of the L7/L12 stalk, and near the tRNA binding site of the peptidyltransferase center. The polypeptide is Large ribosomal subunit protein uL6 (Parabacteroides distasonis (strain ATCC 8503 / DSM 20701 / CIP 104284 / JCM 5825 / NCTC 11152)).